A 459-amino-acid chain; its full sequence is Argininosuccinate lyase (459 aa).

This sequence belongs to the lyase 1 family. Argininosuccinate lyase subfamily.

The protein resides in the cytoplasm. It carries out the reaction 2-(N(omega)-L-arginino)succinate = fumarate + L-arginine. Its pathway is amino-acid biosynthesis; L-arginine biosynthesis; L-arginine from L-ornithine and carbamoyl phosphate: step 3/3. The polypeptide is Argininosuccinate lyase (Chromobacterium violaceum (strain ATCC 12472 / DSM 30191 / JCM 1249 / CCUG 213 / NBRC 12614 / NCIMB 9131 / NCTC 9757 / MK)).